Reading from the N-terminus, the 230-residue chain is Fibronectin type III domain-containing protein 4 (230 aa).

Residues 1-40 (MPGCLPADSVGTMASLMPLSPYLSPTVLLLVSCDLGFVRA) form the signal peptide. Topologically, residues 41–163 (DRPPSPVNVT…GLDGERPLQT (123 aa)) are extracellular. Residues 43–136 (PPSPVNVTVT…PRVHFRTLKG (94 aa)) enclose the Fibronectin type-III domain. Residues Asn48 and Asn143 are each glycosylated (N-linked (GlcNAc...) asparagine). The interval 118–156 (GLRGESPPGPRVHFRTLKGSDRLPSNSSSPGDITVEGLD) is disordered. The helical transmembrane segment at 164 to 184 (GEVVIIVVVLLMWAAVIGLFC) threads the bilayer. The Cytoplasmic portion of the chain corresponds to 185 to 230 (RQYDIIKDNDSNNNPKEKGKGPEQSPQGRPVGTRQKKSPSINTIDV). Residues 193 to 205 (NDSNNNPKEKGKG) show a composition bias toward basic and acidic residues. Positions 193 to 230 (NDSNNNPKEKGKGPEQSPQGRPVGTRQKKSPSINTIDV) are disordered.

The protein localises to the membrane. Its subcellular location is the secreted. Has anti-inflammatory properties. In the colon, acts on macrophages to down-regulate inflammation. May suppress osteoclastogenesis and mature osteoclast resorptive function. In white adipose tissue, decreases local inflammation, via interaction with GPR116. Also required for proper systemic glucose tolerance, specifically sensitizing white adipocytes to insulin and promoting glucose uptake. The insulin sensitizing function in adipose tissue is mediated by interaction with ADGRF5/GPR116 and activation of cAMP signaling. The polypeptide is Fibronectin type III domain-containing protein 4 (FNDC4) (Bos taurus (Bovine)).